The following is a 201-amino-acid chain: Inner membrane protein YnbA (201 aa).

The Periplasmic portion of the chain corresponds to 1-43; the sequence is MTLYQIKPLFQSLLRPTMFWLYKHHVTANHITLAALALSLLTG. Residues 44–64 form a helical membrane-spanning segment; it reads LLLMLAAQPILFLLLPIVLFI. Residues 65 to 84 lie on the Cytoplasmic side of the membrane; it reads RMALNALDGMLARECNQQTR. The helical transmembrane segment at 85–107 threads the bilayer; sequence LGAILNETGDVISDIALYLPFLF. The Periplasmic portion of the chain corresponds to 108 to 116; the sequence is LPESNASLV. The helical transmembrane segment at 117–139 threads the bilayer; the sequence is ILMLFCTILTEFCGLLAQTINGV. Over 140-151 the chain is Cytoplasmic; it reads RSYAGPFGKSDR. Residues 152-172 traverse the membrane as a helical segment; the sequence is ALIFGLWGLAVAIYPQWMQWN. The Periplasmic portion of the chain corresponds to 173 to 175; that stretch reads NLL. A helical transmembrane segment spans residues 176 to 196; it reads WSIASILLLWTAINRCRSVLL. Residues 197–201 lie on the Cytoplasmic side of the membrane; that stretch reads MSAEI.

It is found in the cell inner membrane. This is Inner membrane protein YnbA (ynbA) from Escherichia coli (strain K12).